The primary structure comprises 431 residues: Serine hydroxymethyltransferase 1 (431 aa).

(6S)-5,6,7,8-tetrahydrofolate is bound by residues leucine 127 and 131–133 (GHL). Position 236 is an N6-(pyridoxal phosphate)lysine (lysine 236). Glutamate 252 is a (6S)-5,6,7,8-tetrahydrofolate binding site.

This sequence belongs to the SHMT family. Homodimer. The cofactor is pyridoxal 5'-phosphate.

It is found in the cytoplasm. It carries out the reaction (6R)-5,10-methylene-5,6,7,8-tetrahydrofolate + glycine + H2O = (6S)-5,6,7,8-tetrahydrofolate + L-serine. Its pathway is one-carbon metabolism; tetrahydrofolate interconversion. It participates in amino-acid biosynthesis; glycine biosynthesis; glycine from L-serine: step 1/1. Its function is as follows. Catalyzes the reversible interconversion of serine and glycine with tetrahydrofolate (THF) serving as the one-carbon carrier. This reaction serves as the major source of one-carbon groups required for the biosynthesis of purines, thymidylate, methionine, and other important biomolecules. Also exhibits THF-independent aldolase activity toward beta-hydroxyamino acids, producing glycine and aldehydes, via a retro-aldol mechanism. The polypeptide is Serine hydroxymethyltransferase 1 (Rhizobium meliloti (strain 1021) (Ensifer meliloti)).